Reading from the N-terminus, the 299-residue chain is Taste receptor type 2 member 50 (299 aa).

Methionine 1 is a topological domain (extracellular). A helical membrane pass occupies residues 2 to 22 (VTFLHIFFSILILVLFVLGNF). Residues 23–55 (ANGFIALVNFIDLVKRKKISSADQILTALAVSR) are Cytoplasmic-facing. Residues 56 to 76 (IGLLWALLLNWYLTVLNPAFY) traverse the membrane as a helical segment. Residues 77–87 (SVELRITSYNA) are Extracellular-facing. A helical transmembrane segment spans residues 88–108 (WVVTNHFSMWLAASLSIFYLL). Topologically, residues 109–126 (KIANFSNLIFLHLKRRVR) are cytoplasmic. Residues 127-147 (SVILVILLGPLTFLVCHLFVA) form a helical membrane-spanning segment. Over 148 to 181 (NMDESMSAEEYEGNMTGKLKLRNTVHLSYLTVTT) the chain is Extracellular. Residue asparagine 161 is glycosylated (N-linked (GlcNAc...) asparagine). The helical transmembrane segment at 182 to 202 (LWSFIPFTLSLISFLMLICSL) threads the bilayer. Residues 203–229 (CKHVKKMQLHGEGSQDLSTKVHIKALQ) lie on the Cytoplasmic side of the membrane. Residues 230–250 (TLISFLLLCAIFFLFLIISIW) traverse the membrane as a helical segment. Residues 251-259 (NPRRLQNDP) lie on the Extracellular side of the membrane. Residues 260 to 280 (VVVVSKAVGNIYLALDSFILI) traverse the membrane as a helical segment. The Cytoplasmic portion of the chain corresponds to 281 to 299 (WRTKKLKHTFLLILCQIRC).

The protein belongs to the G-protein coupled receptor T2R family.

The protein resides in the membrane. Receptor that may play a role in the perception of bitterness and is gustducin-linked. May play a role in sensing the chemical composition of the gastrointestinal content. The activity of this receptor may stimulate alpha gustducin, mediate PLC-beta-2 activation and lead to the gating of TRPM5. In Pongo pygmaeus (Bornean orangutan), this protein is Taste receptor type 2 member 50 (TAS2R50).